The chain runs to 210 residues: WASH complex subunit 3 (210 aa).

A coiled-coil region spans residues 49–73 (EEKLASISLRIQQIETTLSILEAKL). The disordered stretch occupies residues 173 to 210 (LDPNLLDTPDAPVPDAVKKNTLDQDDDSDDGSESSFSD). A compositionally biased stretch (acidic residues) spans 195–204 (DQDDDSDDGS).

Belongs to the CCDC53 family. Component of the WASH complex.

This chain is WASH complex subunit 3, found in Salmo salar (Atlantic salmon).